The primary structure comprises 431 residues: Isochorismate synthase MenF (431 aa).

Residue K190 is the Proton acceptor of the active site. E240 serves as the catalytic Proton donor. Mg(2+) is bound by residues E284 and E416.

It belongs to the isochorismate synthase family. As to quaternary structure, homodimer. The cofactor is Mg(2+).

It catalyses the reaction chorismate = isochorismate. It participates in quinol/quinone metabolism; 1,4-dihydroxy-2-naphthoate biosynthesis; 1,4-dihydroxy-2-naphthoate from chorismate: step 1/7. Its pathway is quinol/quinone metabolism; menaquinone biosynthesis. Catalyzes the conversion of chorismate to isochorismate. Can also catalyze the reverse reaction, but with a lower efficiency. This is Isochorismate synthase MenF from Escherichia coli (strain K12).